Consider the following 405-residue polypeptide: Cytoplasmic 60S subunit biogenesis factor ZNF622 (405 aa).

2 consecutive U1-type zinc fingers follow at residues 4–28 and 67–91; these read YTCI…TDWH and TYCT…SKKH. Positions 135 to 230 are disordered; that stretch reads AIRAQPSSSP…GVEEEEEKQA (96 aa). Positions 194–228 are enriched in acidic residues; the sequence is AEEEEDSEEGWEEMDSDEDLGSEEEMEGVEEEEEK.

Belongs to the REI1 family. Homo- and heterodimer. Associates with pre-60S ribosomal particles. In terms of tissue distribution, mainly expressed in the ovary. Mainly expressed in the testis.

Its subcellular location is the cytoplasm. The protein resides in the nucleus. Its function is as follows. Pre-60S-associated cytoplasmic factor involved in the cytoplasmic maturation of the 60S subunit. In Gallus gallus (Chicken), this protein is Cytoplasmic 60S subunit biogenesis factor ZNF622 (ZNF622).